Reading from the N-terminus, the 385-residue chain is Tuliposide A-converting enzyme 1, chloroplastic (385 aa).

Residues methionine 1–threonine 77 constitute a chloroplast transit peptide. The active-site Acyl-ester intermediate is the serine 235. Residues aspartate 327 and histidine 359 each act as charge relay system in the active site.

This sequence belongs to the AB hydrolase superfamily. As to quaternary structure, homodimer. Expressed in roots, stems, leaves, petals, stamens and pistils, but not in bulb scales.

Its subcellular location is the plastid. It localises to the chloroplast. It carries out the reaction 6-tuliposide A = tulipalin A + D-glucose. With respect to regulation, inhibited by NaF, AgNO(3), HgCl(2), CuSO(4) and phenylmethylsulfonyl fluoride (PMSF). In terms of biological role, lactone-forming carboxylesterases, specifically catalyzing intramolecular transesterification, but not hydrolysis. Involved in the biosynthesis of tulipalins, defensive chemicals that show antimicrobial activities against a broad range of strains of bacteria and fungi. Substrates are 6-tuliposide A &gt; 6-tuliposide B. The polypeptide is Tuliposide A-converting enzyme 1, chloroplastic (TCEA1) (Tulipa gesneriana (Garden tulip)).